The primary structure comprises 62 residues: uncharacterized protein (62 aa).

Residues 1 to 62 form a disordered region; it reads MSSTAEEMAA…SNGEAKRKEK (62 aa). Residues 28–37 show a composition bias toward basic and acidic residues; it reads TKSDRVEHKH.

This is an uncharacterized protein from Caenorhabditis elegans.